A 36-amino-acid polypeptide reads, in one-letter code: Photosystem II reaction center protein Y (36 aa).

The Lumenal segment spans residues 1–4 (MDTR). The helical transmembrane segment at 5–23 (LLVIAAPVLVAASWALFNI) threads the bilayer. Residues 24–36 (GRLAIQQIQRLSR) lie on the Stromal side of the membrane.

It belongs to the PsbY family. As to quaternary structure, PSII is composed of 1 copy each of membrane proteins PsbA, PsbB, PsbC, PsbD, PsbE, PsbF, PsbH, PsbI, PsbJ, PsbK, PsbL, PsbM, PsbT, PsbX, PsbY, PsbZ, Psb30/Ycf12, at least 3 peripheral proteins of the oxygen-evolving complex and a large number of cofactors. It forms dimeric complexes.

The protein resides in the plastid. Its subcellular location is the chloroplast thylakoid membrane. In terms of biological role, loosely associated component of the core of photosystem II (PSII), it is not always seen in crystals. PSII is a light-driven water plastoquinone oxidoreductase, using light energy to abstract electrons from H(2)O, generating a proton gradient subsequently used for ATP formation. The polypeptide is Photosystem II reaction center protein Y (Thalassiosira pseudonana (Marine diatom)).